The primary structure comprises 245 residues: Ureidoacrylate amidohydrolase RutB (245 aa).

The active-site Proton acceptor is the Asp-41. The active site involves Lys-150. Cys-183 (nucleophile) is an active-site residue.

The protein belongs to the isochorismatase family. RutB subfamily.

It catalyses the reaction (Z)-3-ureidoacrylate + H2O + H(+) = (Z)-3-aminoacrylate + NH4(+) + CO2. It carries out the reaction (Z)-3-ureidoacrylate + H2O = (Z)-3-aminoacrylate + carbamate + H(+). The catalysed reaction is (Z)-2-methylureidoacrylate + H2O + H(+) = (Z)-2-methylaminoacrylate + NH4(+) + CO2. Functionally, hydrolyzes ureidoacrylate to form aminoacrylate and carbamate. The carbamate hydrolyzes spontaneously, thereby releasing one of the nitrogen atoms of the pyrimidine ring as ammonia and one of its carbon atoms as CO2. In Pseudomonas savastanoi pv. phaseolicola (strain 1448A / Race 6) (Pseudomonas syringae pv. phaseolicola (strain 1448A / Race 6)), this protein is Ureidoacrylate amidohydrolase RutB.